The sequence spans 191 residues: Thymidine kinase (191 aa).

Residues 9–16 and 85–88 contribute to the ATP site; these read GSMNSGKT and DESQ. Residue Glu-86 is the Proton acceptor of the active site. Positions 143, 146, 181, and 184 each coordinate Zn(2+).

Belongs to the thymidine kinase family. As to quaternary structure, homotetramer.

The protein resides in the cytoplasm. The enzyme catalyses thymidine + ATP = dTMP + ADP + H(+). In Listeria monocytogenes serotype 4b (strain F2365), this protein is Thymidine kinase.